The primary structure comprises 168 residues: uncharacterized protein (168 aa).

The tract at residues 18-73 is disordered; that stretch reads RTTVKTKSHNPKTLYPNNKPRWESKLHAGPKGFQSSRTSEKPGRPDPDPEDDPPIP. The span at 55-64 shows a compositional bias: basic and acidic residues; that stretch reads TSEKPGRPDP. The next 2 helical transmembrane spans lie at 84-104 and 113-133; these read IVVSVGTPLGLGVAILKVLEV and VPLWVPYLTTLVTFGSSALGI.

The protein localises to the membrane. This is an uncharacterized protein from Arabidopsis thaliana (Mouse-ear cress).